The chain runs to 770 residues: Protein PAT1 homolog 1 (770 aa).

The segment at 1–26 (MFRYESLEDCPLDEDEDAFQGLGEED) is disordered. Residues 1–84 (MFRYESLEDC…EMDLLGDHEE (84 aa)) form a region A; interaction with DDX6/RCK region. An involved in nuclear foci localization region spans residues 1–397 (MFRYESLEDC…HRSSHQDHLR (397 aa)). Over residues 7–26 (LEDCPLDEDEDAFQGLGEED) the composition is skewed to acidic residues. Residues 85–388 (NLAERLSKMV…LNGAGDRGSH (304 aa)) are region N; interaction with decapping machinery. The short motif at 86-95 (LAERLSKMVI) is the Nuclear export signal element. Phosphoserine is present on S177. T178 carries the phosphothreonine modification. Residues S179 and S184 each carry the phosphoserine modification. Position 194 is a phosphothreonine (T194). Asymmetric dimethylarginine is present on residues R217, R223, and R263. The involved in RNA-binding stretch occupies residues 223–397 (RYPAPYGERM…HRSSHQDHLR (175 aa)). S278 is subject to Phosphoserine. R284 is subject to Asymmetric dimethylarginine. The span at 314–323 (GFRAFFSAPP) shows a compositional bias: low complexity. Disordered stretches follow at residues 314–344 (GFRAFFSAPPSATPPPQQHPPGPGPHLQNLR) and 360–399 (QHRRLLHQRQQQNRSQHRNLNGAGDRGSHRSSHQDHLRKD). Residues 324–337 (SATPPPQQHPPGPG) show a composition bias toward pro residues. Low complexity predominate over residues 367–380 (QRQQQNRSQHRNLN). Omega-N-methylarginine is present on R385. Positions 385 to 399 (RGSHRSSHQDHLRKD) are enriched in basic and acidic residues. The interval 389 to 448 (RSSHQDHLRKDPYANLMLQREKDWVSKIQMMQLQSTDPYLDDFYYQNYFEKLEKLSAAEE) is region H. The involved in nuclear speckle localization stretch occupies residues 398–770 (KDPYANLMLQ…TKLQLVQGIR (373 aa)). Positions 449–770 (IQGDGPKKER…TKLQLVQGIR (322 aa)) are region C.

The protein belongs to the PAT1 family. Interacts (via region A) with DDX6/RCK. Interacts (via region H and region C) with LSM1 and LSM4. Interacts (via region N) with DCP1A, DCP2, EDC3, EDC4 and XRN1. Interacts with the CCR4-NOT complex. Interacts with the Lsm-containing SMN-Sm protein complex. Interacts with EIF4ENIF1/4E-T. Ubiquitous.

The protein resides in the cytoplasm. It localises to the P-body. Its subcellular location is the nucleus. The protein localises to the PML body. It is found in the nucleus speckle. In terms of biological role, RNA-binding protein involved in deadenylation-dependent decapping of mRNAs, leading to the degradation of mRNAs. Acts as a scaffold protein that connects deadenylation and decapping machinery. Required for cytoplasmic mRNA processing body (P-body) assembly. (Microbial infection) In case of infection, required for translation and replication of hepatitis C virus (HCV). This chain is Protein PAT1 homolog 1 (PATL1), found in Homo sapiens (Human).